Reading from the N-terminus, the 224-residue chain is Thiamine-phosphate synthase (224 aa).

Residues 44–48 (QFREK) and Asn-79 each bind 4-amino-2-methyl-5-(diphosphooxymethyl)pyrimidine. Mg(2+) is bound by residues Asp-80 and Asp-99. Ser-117 is a binding site for 4-amino-2-methyl-5-(diphosphooxymethyl)pyrimidine. A 2-[(2R,5Z)-2-carboxy-4-methylthiazol-5(2H)-ylidene]ethyl phosphate-binding site is contributed by 143 to 145 (TET). Lys-146 is a 4-amino-2-methyl-5-(diphosphooxymethyl)pyrimidine binding site. Residues Gly-175 and 195-196 (IS) contribute to the 2-[(2R,5Z)-2-carboxy-4-methylthiazol-5(2H)-ylidene]ethyl phosphate site.

It belongs to the thiamine-phosphate synthase family. Mg(2+) is required as a cofactor.

It carries out the reaction 2-[(2R,5Z)-2-carboxy-4-methylthiazol-5(2H)-ylidene]ethyl phosphate + 4-amino-2-methyl-5-(diphosphooxymethyl)pyrimidine + 2 H(+) = thiamine phosphate + CO2 + diphosphate. The enzyme catalyses 2-(2-carboxy-4-methylthiazol-5-yl)ethyl phosphate + 4-amino-2-methyl-5-(diphosphooxymethyl)pyrimidine + 2 H(+) = thiamine phosphate + CO2 + diphosphate. It catalyses the reaction 4-methyl-5-(2-phosphooxyethyl)-thiazole + 4-amino-2-methyl-5-(diphosphooxymethyl)pyrimidine + H(+) = thiamine phosphate + diphosphate. It participates in cofactor biosynthesis; thiamine diphosphate biosynthesis; thiamine phosphate from 4-amino-2-methyl-5-diphosphomethylpyrimidine and 4-methyl-5-(2-phosphoethyl)-thiazole: step 1/1. In terms of biological role, condenses 4-methyl-5-(beta-hydroxyethyl)thiazole monophosphate (THZ-P) and 2-methyl-4-amino-5-hydroxymethyl pyrimidine pyrophosphate (HMP-PP) to form thiamine monophosphate (TMP). The polypeptide is Thiamine-phosphate synthase (Bacillus velezensis (strain DSM 23117 / BGSC 10A6 / LMG 26770 / FZB42) (Bacillus amyloliquefaciens subsp. plantarum)).